A 367-amino-acid polypeptide reads, in one-letter code: F-box only protein 25 (367 aa).

Residues 1–83 (MPFLGQDWRS…NDTNTQSFYR (83 aa)) are interaction with beta-actin. The 49-residue stretch at 226–274 (LTLSDLPLHMLNNILYRFSDGWDIITLGQVTPTLYMLSEDRQLWKKLCQ) folds into the F-box domain.

As to quaternary structure, part of a SCF (SKP1-cullin-F-box) protein ligase complex consisting of FBXO25, SKP1, CUL1 and RBX1. Interacts directly with SKP1 and CUL1. Interacts (via C-terminus) with beta-actin (via N-terminus). As to expression, expressed in all brain tissue observed.

It localises to the nucleus. Its pathway is protein modification; protein ubiquitination. In terms of biological role, substrate-recognition component of the SCF (SKP1-CUL1-F-box protein)-type E3 ubiquitin ligase complex. May play a role in accumulation of expanded polyglutamine (polyQ) protein huntingtin (HTT). This is F-box only protein 25 (FBXO25) from Homo sapiens (Human).